A 121-amino-acid polypeptide reads, in one-letter code: Large ribosomal subunit protein bL19 (121 aa).

The protein belongs to the bacterial ribosomal protein bL19 family.

In terms of biological role, this protein is located at the 30S-50S ribosomal subunit interface and may play a role in the structure and function of the aminoacyl-tRNA binding site. In Chlorobium phaeovibrioides (strain DSM 265 / 1930) (Prosthecochloris vibrioformis (strain DSM 265)), this protein is Large ribosomal subunit protein bL19.